A 210-amino-acid chain; its full sequence is Mitochondrial cardiolipin hydrolase (210 aa).

Topologically, residues 1 to 5 (MLLWG) are mitochondrial intermembrane. The chain crosses the membrane as a helical span at residues 6–24 (RWKLAAGLAGLALSLELFY). Residues 25 to 210 (RYMRRRKPLR…YNFFPEKENK (186 aa)) are Cytoplasmic-facing. A PLD phosphodiesterase domain is found at 138-165 (SSGYMHHKFAVVDGTVVLTGSLNWTVQA). Active-site residues include histidine 143, lysine 145, and aspartate 150.

Belongs to the phospholipase D family. MitoPLD/Zucchini subfamily. In terms of assembly, homodimer.

The protein resides in the mitochondrion outer membrane. It catalyses the reaction a cardiolipin + H2O = a 1,2-diacyl-sn-glycero-3-phospho-(1'-sn-glycerol) + a 1,2-diacyl-sn-glycero-3-phosphate + H(+). Functionally, presents phospholipase and nuclease activities, depending on the different physiological conditions. Plays a key role in mitochondrial fusion and fission via its phospholipase activity. In its phospholipase role, it uses the mitochondrial lipid cardiolipin as substrate to generate phosphatidate (PA or 1,2-diacyl-sn-glycero-3-phosphate), a second messenger signaling lipid. Production of PA facilitates Mitofusin-mediated fusion, whereas the cleavage of PA by the Lipin family of phosphatases produces diacylgycerol (DAG) which promotes mitochondrial fission. Regulates mitochondrial shape through facilitating mitochondrial fusion. During spermatogenesis, plays a critical role in PIWI-interacting RNA (piRNA) biogenesis. piRNAs provide essential protection against the activity of mobile genetic elements. piRNA-mediated transposon silencing is thus critical for maintaining genome stability, in particular in germline cells when transposons are mobilized as a consequence of wide-spread genomic demethylation. Has been shown to be a backbone-non-specific, single strand-specific nuclease, cleaving either RNA or DNA substrates with similar affinity. Produces 5' phosphate and 3' hydroxyl termini, suggesting it could directly participate in the processing of primary piRNA transcripts. Has been proposed to act as a cardiolipin hydrolase to generate phosphatidic acid at mitochondrial surface. Although it cannot be excluded that it can act as a phospholipase in some circumstances, this activity could not be confirmed. This chain is Mitochondrial cardiolipin hydrolase (pld6), found in Xenopus laevis (African clawed frog).